We begin with the raw amino-acid sequence, 461 residues long: Photosystem II CP43 reaction center protein (461 aa).

Positions 1–2 (ME) are excised as a propeptide. Threonine 3 carries the post-translational modification N-acetylthreonine. Threonine 3 is subject to Phosphothreonine. 5 helical membrane-spanning segments follow: residues 57–81 (LFEVAHFVPEKPMYEQGLILLPHLA), 122–143 (LLGPETLEESFPFFGYVWKDRN), 166–188 (KALYFGGVYDTWAPGGGDVRKIT), 243–263 (KPFAWARRALVWSGEAYLSYS), and 279–300 (WFNNTAYPSEFYGPTGPEASQA). Glutamate 355 lines the [CaMn4O5] cluster pocket. The helical transmembrane segment at 435-459 (RARAAAAGFEKGIDRDFEPVLSMTP) threads the bilayer.

This sequence belongs to the PsbB/PsbC family. PsbC subfamily. As to quaternary structure, PSII is composed of 1 copy each of membrane proteins PsbA, PsbB, PsbC, PsbD, PsbE, PsbF, PsbH, PsbI, PsbJ, PsbK, PsbL, PsbM, PsbT, PsbX, PsbY, PsbZ, Psb30/Ycf12, at least 3 peripheral proteins of the oxygen-evolving complex and a large number of cofactors. It forms dimeric complexes. It depends on Binds multiple chlorophylls and provides some of the ligands for the Ca-4Mn-5O cluster of the oxygen-evolving complex. It may also provide a ligand for a Cl- that is required for oxygen evolution. PSII binds additional chlorophylls, carotenoids and specific lipids. as a cofactor.

The protein resides in the plastid. It is found in the chloroplast thylakoid membrane. Its function is as follows. One of the components of the core complex of photosystem II (PSII). It binds chlorophyll and helps catalyze the primary light-induced photochemical processes of PSII. PSII is a light-driven water:plastoquinone oxidoreductase, using light energy to abstract electrons from H(2)O, generating O(2) and a proton gradient subsequently used for ATP formation. This Platanus occidentalis (Sycamore) protein is Photosystem II CP43 reaction center protein.